We begin with the raw amino-acid sequence, 177 residues long: Translation initiation factor IF-3 (177 aa).

Belongs to the IF-3 family. As to quaternary structure, monomer.

It is found in the cytoplasm. Its function is as follows. IF-3 binds to the 30S ribosomal subunit and shifts the equilibrium between 70S ribosomes and their 50S and 30S subunits in favor of the free subunits, thus enhancing the availability of 30S subunits on which protein synthesis initiation begins. In Elusimicrobium minutum (strain Pei191), this protein is Translation initiation factor IF-3.